A 278-amino-acid polypeptide reads, in one-letter code: MERLVIRMPFSHLSTYSLVWVMAAVVLCTAQVQVVTQDEREQLYTPASLKCSLQNAQEALIVTWQKKKAVSPENMVTFSENHGVVIQPAYKDKINITQLGLQNSTITFWNITLEDEGCYMCLFNTFGFGKISGTACLTVYVQPIVSLHYKFSEDHLNITCSATARPAPMVFWKVPRSGIENSTVTLSHPNGTTSVTSILHIKDPKNQVGKEVICQVLHLGTVTDFKQTVNKGYWFSVPLLLSIVSLVILLVLISILLYWKRHRNQDRGELSQGVQKMT.

The signal sequence occupies residues 1–30 (MERLVIRMPFSHLSTYSLVWVMAAVVLCTA). An Ig-like V-type domain is found at 31–141 (QVQVVTQDER…SGTACLTVYV (111 aa)). Residues 31-232 (QVQVVTQDER…TDFKQTVNKG (202 aa)) lie on the Extracellular side of the membrane. 2 disulfide bridges follow: cysteine 51–cysteine 121 and cysteine 118–cysteine 136. 3 N-linked (GlcNAc...) asparagine glycosylation sites follow: asparagine 95, asparagine 103, and asparagine 110. One can recognise an Ig-like C2-type domain in the interval 142–232 (QPIVSLHYKF…TDFKQTVNKG (91 aa)). N-linked (GlcNAc...) asparagine glycans are attached at residues asparagine 157, asparagine 181, and asparagine 190. The cysteines at positions 160 and 214 are disulfide-linked. The helical transmembrane segment at 233–259 (YWFSVPLLLSIVSLVILLVLISILLYW) threads the bilayer. Residues 260-278 (KRHRNQDRGELSQGVQKMT) lie on the Cytoplasmic side of the membrane.

CD200 and CD200R1 interact via their respective N-terminal Ig-like domains.

It localises to the cell membrane. In terms of biological role, costimulates T-cell proliferation. May regulate myeloid cell activity in a variety of tissues. This chain is OX-2 membrane glycoprotein (CD200), found in Homo sapiens (Human).